Here is a 159-residue protein sequence, read N- to C-terminus: Afifavidin (159 aa).

The signal sequence occupies residues 1 to 23; sequence MRRLASLAVALPLLAVVASPALA. The 116-residue stretch at 36–151 folds into the Avidin-like domain; the sequence is GVPAVSSSWV…GSDTFTLVNK (116 aa). Biotin-binding residues include Asn46, Ser50, Tyr66, Asn68, and Gly74. An intrachain disulfide couples Cys75 to Cys104. 3 residues coordinate biotin: Ser106, Thr108, and Asp144.

Belongs to the avidin/streptavidin family. Exhibits a dynamic oligomeric assembly: the apo form self-assembles mostly into toroid-shaped homooctamers, with a small fraction of homodimers, yet upon biotin binding the intact afifavidin consists solely of the dimer.

It localises to the secreted. Functionally, the exact role played by afifavidin is still obscure. Forms a strong non-covalent complex with biotin and 2-iminobiotin. The chain is Afifavidin from Afifella pfennigii (Rhodobium pfennigii).